The sequence spans 187 residues: Cell division protein SepF (187 aa).

The protein belongs to the SepF family. As to quaternary structure, homodimer. Interacts with FtsZ.

The protein localises to the cytoplasm. Cell division protein that is part of the divisome complex and is recruited early to the Z-ring. Probably stimulates Z-ring formation, perhaps through the cross-linking of FtsZ protofilaments. Its function overlaps with FtsA. This is Cell division protein SepF from Streptococcus suis (strain 98HAH33).